The sequence spans 214 residues: Protein PsaE (214 aa).

The N-terminal stretch at 1 to 24 is a signal peptide; the sequence is MSHCVVLNKLESVLIIGDSRYALS. The ompR/PhoB-type DNA-binding region spans 1–94; it reads MSHCVVLNKL…YKNEGYSYQK (94 aa).

Functionally, required for expression of pH 6 antigen. The chain is Protein PsaE (psaE) from Yersinia pseudotuberculosis serotype I (strain IP32953).